The primary structure comprises 319 residues: Transmembrane and ubiquitin-like domain-containing protein 2 (319 aa).

Residues 36 to 56 (VMVVAGVVVLTLALVLAWLST) traverse the membrane as a helical segment. Disordered stretches follow at residues 88-130 (VNQG…GDME) and 146-165 (QAGL…DSTC). Over residues 95–111 (PTEHPHPSGGSDDKAEE) the composition is skewed to basic and acidic residues. Residues 173–246 (INVRLKFLND…IHCHRSPPGA (74 aa)) enclose the Ubiquitin-like domain. Helical transmembrane passes span 264–284 (LGVN…GVVW) and 293–313 (FFTA…SFLV).

The protein localises to the membrane. This chain is Transmembrane and ubiquitin-like domain-containing protein 2 (Tmub2), found in Rattus norvegicus (Rat).